The following is a 290-amino-acid chain: UBX domain-containing protein 1-B (290 aa).

The 42-residue stretch at 1–42 folds into the UBA domain; it reads MADCSALESLIEMGFSPSRAEKALSATGNQGIEPAMDWLVEH. Positions 49 to 210 are disordered; sequence KEPSVVIPED…VQEPPTKKEY (162 aa). Basic and acidic residues-rich tracts occupy residues 80–117 and 132–172; these read PLTE…EQEK and RMQE…DRAR. Residues 81–171 are a coiled coil; the sequence is LTEEEKEKQT…KIARDKADRA (91 aa). Over residues 185-201 the composition is skewed to low complexity; the sequence is PAETSVPATAPSPSSPV. Residues 208–287 form the UBX domain; the sequence is KEYDQCRIQV…GLVPTAVLIV (80 aa).

It localises to the cytoplasm. In terms of biological role, component of a complex required to couple deglycosylation and proteasome-mediated degradation of misfolded proteins in the endoplasmic reticulum that are retrotranslocated in the cytosol. Involved in ubiquitin-proteasome systems. The protein is UBX domain-containing protein 1-B (ubxn1-b) of Xenopus laevis (African clawed frog).